The primary structure comprises 236 residues: Small ribosomal subunit protein uS2c (236 aa).

This sequence belongs to the universal ribosomal protein uS2 family.

The protein resides in the plastid. Its subcellular location is the chloroplast. In Buxus microphylla (Littleleaf boxwood), this protein is Small ribosomal subunit protein uS2c (rps2).